The primary structure comprises 974 residues: MSSKKYELDAAAFEDKPESHSDAEMTPQKPQRRQSVLSKAVSEHDERATGPATDLLPPSKGLTTEEAEELLKKYGRNELPEKKTPSWLIYVRGLWGPMPAALWIAIIIEFALENWPDGAILFAIQIANATIGWYETIKAGDAVAALKNSLKPTATVYRDSKWQQIDAAVLVPGDLVKLASGSAVPADCSINEGVIDVDEAALTGESLPVTMGPEHMPKMGSNVVRGEVEGTVQYTGSLTFFGKTAALLQSVESDLGNIHVILRRVMFSLCAISFMLCMCCFIYLLARFYETFRHALQFAVVVLVVSIPIALEIVVTTTLAVGSKHLSKHKIIVTKLSAIEMMSGVNMLCSDKTGTLTLNKMEIQEQCFTFEEGNDLKSTLVLAALAAKWREPPRDALDTMVLGAADLDECDNYQQLNFVPFDPTTKRTAATLVDRRSGEKFDVTKGAPHVILQMVYNQDEINDEVVDIIDSLAARGVRCLSVAKTDQQGRWHMAGILTFLDPPRPDTKDTIRRSKEYGVDVKMITGDHLLIAKEMCRMLDLDPNILTADKLPQIKDANDLPEDLGEKYGDMMLSVGGFAQVFPEHKFMIVETLRQRGYTCAMTGDGVNDAPALKRADVGIAVHGATDAARAAADMVLTEPGLSVVVEAMLVSREVFQRMLSFLTYRISATLQLVCFFFIACFSLTPKAYGSVDPHFQFFHLPVLMFMLITLLNDGCLMTIGYDHVIPSERPQKWNLPVVFVSASILAAVACGSSLMLLWIGLEGYSSQYYENSWFHRLGLAQLPQGKLVTMMYLKISISDFLTLFSSRTGGHFFFYMPPSPILFCGAIISLLVSTMAASFWHKSRPDNVLTEGLAWGQTNAEKLLPLWVWIYCIVWWFVQDVVKVLAHICMDAVDLFGCVSDASGSGPIKPYSDDMKVNGFEPVKKPAEKSTEKALNSSVSSASHKALEGLREDTHSPIEEASPVNVYVSRDQK.

The span at 1 to 23 (MSSKKYELDAAAFEDKPESHSDA) shows a compositional bias: basic and acidic residues. The tract at residues 1-61 (MSSKKYELDA…ATDLLPPSKG (61 aa)) is disordered. The Cytoplasmic segment spans residues 1–92 (MSSKKYELDA…KTPSWLIYVR (92 aa)). The helical transmembrane segment at 93-112 (GLWGPMPAALWIAIIIEFAL) threads the bilayer. Over 113-117 (ENWPD) the chain is Extracellular. The helical transmembrane segment at 118 to 137 (GAILFAIQIANATIGWYETI) threads the bilayer. The Cytoplasmic portion of the chain corresponds to 138-264 (KAGDAVAALK…LGNIHVILRR (127 aa)). A helical transmembrane segment spans residues 265 to 286 (VMFSLCAISFMLCMCCFIYLLA). Topologically, residues 287 to 294 (RFYETFRH) are extracellular. A helical transmembrane segment spans residues 295 to 321 (ALQFAVVVLVVSIPIALEIVVTTTLAV). Topologically, residues 322–630 (GSKHLSKHKI…AVHGATDAAR (309 aa)) are cytoplasmic. The 4-aspartylphosphate intermediate role is filled by D351. Mg(2+) contacts are provided by D605 and D609. A helical membrane pass occupies residues 631-651 (AAADMVLTEPGLSVVVEAMLV). The Extracellular portion of the chain corresponds to 652 to 661 (SREVFQRMLS). Residues 662 to 684 (FLTYRISATLQLVCFFFIACFSL) traverse the membrane as a helical segment. The Cytoplasmic segment spans residues 685 to 697 (TPKAYGSVDPHFQ). A helical membrane pass occupies residues 698 to 712 (FFHLPVLMFMLITLL). Topologically, residues 713–737 (NDGCLMTIGYDHVIPSERPQKWNLP) are extracellular. A Mg(2+)-binding site is contributed by D714. The chain crosses the membrane as a helical span at residues 738 to 761 (VVFVSASILAAVACGSSLMLLWIG). Residues 762-812 (LEGYSSQYYENSWFHRLGLAQLPQGKLVTMMYLKISISDFLTLFSSRTGGH) are Cytoplasmic-facing. Residues 813–840 (FFFYMPPSPILFCGAIISLLVSTMAASF) form a helical membrane-spanning segment. At 841–868 (WHKSRPDNVLTEGLAWGQTNAEKLLPLW) the chain is on the extracellular side. Residues 869–887 (VWIYCIVWWFVQDVVKVLA) form a helical membrane-spanning segment. At 888-974 (HICMDAVDLF…VNVYVSRDQK (87 aa)) the chain is on the cytoplasmic side. Over residues 950 to 959 (GLREDTHSPI) the composition is skewed to basic and acidic residues. Residues 950 to 974 (GLREDTHSPIEEASPVNVYVSRDQK) form a disordered region.

Belongs to the cation transport ATPase (P-type) (TC 3.A.3) family. Type IIIA subfamily.

Its subcellular location is the membrane. It catalyses the reaction ATP + H2O + H(+)(in) = ADP + phosphate + 2 H(+)(out). In Leishmania donovani, this protein is Probable proton ATPase 1A (H1A).